Here is a 115-residue protein sequence, read N- to C-terminus: U3-lycotoxin-Ls1e (115 aa).

Residues 1–20 form the signal peptide; that stretch reads MKFVLLFGVLSLTLFSYSSA. A propeptide spanning residues 21–44 is cleaved from the precursor; that stretch reads EMLDDFDQADEDELLSLIEKEEAR. 4 cysteine pairs are disulfide-bonded: C48–C63, C55–C72, C62–C87, and C74–C85.

This sequence belongs to the neurotoxin 19 (CSTX) family. 01 subfamily. Expressed by the venom gland.

Its subcellular location is the secreted. This Lycosa singoriensis (Wolf spider) protein is U3-lycotoxin-Ls1e.